The sequence spans 583 residues: Laccase-14 (583 aa).

The signal sequence occupies residues 1–30 (MAPSLGSGSTRILLIVSLLLCLRQQAVVDA). Plastocyanin-like domains are found at residues 38 to 158 (HVGN…PRPG) and 168 to 320 (AEHT…YDDD). Residues Asn41 and Asn84 are each glycosylated (N-linked (GlcNAc...) asparagine). Residues His88 and His90 each contribute to the Cu cation site. Asn126 carries N-linked (GlcNAc...) asparagine glycosylation. His137 and His139 together coordinate Cu cation. N-linked (GlcNAc...) asparagine glycans are attached at residues Asn179, Asn251, Asn304, Asn338, Asn388, Asn400, Asn446, and Asn464. One can recognise a Plastocyanin-like 3 domain in the interval 426–567 (DFPDRPPVMF…AMAFDVQDGP (142 aa)). Cu cation-binding residues include His482, His485, His487, His546, Cys547, His548, and His552.

The protein belongs to the multicopper oxidase family. Cu cation is required as a cofactor.

The protein localises to the secreted. The protein resides in the extracellular space. It is found in the apoplast. It catalyses the reaction 4 hydroquinone + O2 = 4 benzosemiquinone + 2 H2O. Functionally, lignin degradation and detoxification of lignin-derived products. The protein is Laccase-14 (LAC14) of Oryza sativa subsp. japonica (Rice).